The chain runs to 251 residues: Mediator of RNA polymerase II transcription subunit 7 (251 aa).

A disordered region spans residues 1–38 (MLPGFGAQTVSPFPNPPEYASAYTSDRINNGSAPPPPH). The span at 22 to 32 (AYTSDRINNGS) shows a compositional bias: polar residues.

It belongs to the Mediator complex subunit 7 family. Component of the Mediator complex. Interacts with mdt-10 and mdt-21. Interacts with RNA polymerase II.

Its subcellular location is the nucleus. Component of the Mediator complex, a coactivator involved in the regulated transcription of nearly all RNA polymerase II-dependent genes. Mediator functions as a bridge to convey information from gene-specific regulatory proteins to the basal RNA polymerase II transcription machinery. Mediator is recruited to promoters by direct interactions with regulatory proteins and serves as a scaffold for the assembly of a functional preinitiation complex with RNA polymerase II and the general transcription factors. Required for germ cell development and gonadal growth. This Caenorhabditis elegans protein is Mediator of RNA polymerase II transcription subunit 7 (let-49).